The chain runs to 376 residues: Alkanesulfonate monooxygenase (376 aa).

Belongs to the SsuD family.

The enzyme catalyses an alkanesulfonate + FMNH2 + O2 = an aldehyde + FMN + sulfite + H2O + 2 H(+). Catalyzes the desulfonation of aliphatic sulfonates. This is Alkanesulfonate monooxygenase from Bacillus licheniformis (strain ATCC 14580 / DSM 13 / JCM 2505 / CCUG 7422 / NBRC 12200 / NCIMB 9375 / NCTC 10341 / NRRL NRS-1264 / Gibson 46).